The primary structure comprises 623 residues: Glutathione import ATP-binding protein GsiA (623 aa).

ABC transporter domains lie at 15–269 (VENL…RALL) and 314–564 (LRVR…RKLL). ATP contacts are provided by residues 49–56 (GESGSGKS) and 357–364 (GESGSGKS).

It belongs to the ABC transporter superfamily. Glutathione importer (TC 3.A.1.5.11) family. In terms of assembly, the complex is composed of two ATP-binding proteins (GsiA), two transmembrane proteins (GsiC and GsiD) and a solute-binding protein (GsiB).

It localises to the cell inner membrane. It catalyses the reaction glutathione(out) + ATP + H2O = glutathione(in) + ADP + phosphate + H(+). Its function is as follows. Part of the ABC transporter complex GsiABCD involved in glutathione import. Responsible for energy coupling to the transport system. In Shigella sonnei (strain Ss046), this protein is Glutathione import ATP-binding protein GsiA.